The sequence spans 977 residues: MQSNLLKVLGVLAIVATLVCFIFAALGMIGAVKVGDGCYMRYAPDGKGGSDSITGTITLNANANYVNTSKMLPDGTTQLIPDPNRYGEWLNTQVLVENNQPVNLQVVGQVSLCLAYVPKDNVQFTESTRPGKSNLDDKGNMIPIPRITDANNPPLSLIMDAKNNEWRNIAELYANDRVLVSVSPNFANTDATVEDAFKGTKVTKNCSQGQTSYEPICGKYSVYHGEYVNDCEWRDKYWKCNYHHSCDTSFWGGCGLGCPCAFGKICCGEWICDSCGAWVNIRTSMPEAYKDDGSVTKAWSDNINNLFFDLFNLECSNNSKTLPNGQCPDAVRDRSPKNLDFIKGRCSGTWVEDQCNDGTVSTPELSNYKYFWYTADGKGGKGPTGLIYQMNDAGSVSQALPSKLEFAKFVADTDQPADYKDKDGKYLYKVIYNIPFNSNTEKSYLQYRLWSPTSQDASKNTGGYVLNIKQTKCYRENGNSFNDTFDDRGRVQYIIVKPSENPNTSGKTYSPQGINVNSDGKYNFNANEAGYIWMKILNDPSNNLRDYKDSEGNYKVHFSTSLKVGSFTIKVMNPLLELFKTKVQGAATSIFKNMVCYKANDSSSCTNFFTYIKAILILYVMTYGAMFLLGFAKINQKELVTRIAKIGVVSGLMNGNTFEFFNNYLFDAITNFSDAIIANMSGYSLYTSTNTISNPFMFLDAVMSKIFFSQTFIAQLLSLLSLGLSGIIYFIITFIAVGIVIITALRAVAVYIMAFMATCILIGIAPLFISFLLFDFTRYLFDNWVRFTIRYMIEPVVMMAGIIVLTQLFTIYLDFVLGYSVCWKCALPIKIPFIGTILPIALLNVPIFCINWFAPWGMDYMSGMMGVNMQNIVALVIIAYGMYGYVEFSGRMVAKLTSAAGPSATEIGGRMSHDAGQKALSPIGMDDKTRQGITGRAEARLKQRNKTLDQAEKNRKNTPKEGGEKTNAEPPQPEARG.

Positions 1–24 are cleaved as a signal peptide; that stretch reads MQSNLLKVLGVLAIVATLVCFIFA. The interval 125–146 is disordered; it reads TESTRPGKSNLDDKGNMIPIPR. 6 helical membrane passes run 612–632, 722–742, 754–774, 796–816, 833–853, and 866–886; these read IKAI…LGFA, LGLS…IVII, AFMA…FLLF, VVMM…LDFV, FIGT…INWF, and GVNM…YGYV. A disordered region spans residues 918–977; it reads KALSPIGMDDKTRQGITGRAEARLKQRNKTLDQAEKNRKNTPKEGGEKTNAEPPQPEARG. Positions 937–967 are enriched in basic and acidic residues; it reads AEARLKQRNKTLDQAEKNRKNTPKEGGEKTN.

Belongs to the TrbL/VirB6 family.

Its subcellular location is the cell membrane. This is an uncharacterized protein from Rickettsia felis (strain ATCC VR-1525 / URRWXCal2) (Rickettsia azadi).